Here is a 161-residue protein sequence, read N- to C-terminus: 3-hydroxyacyl-[acyl-carrier-protein] dehydratase FabZ (161 aa).

His55 is an active-site residue.

The protein belongs to the thioester dehydratase family. FabZ subfamily.

The protein resides in the cytoplasm. It catalyses the reaction a (3R)-hydroxyacyl-[ACP] = a (2E)-enoyl-[ACP] + H2O. Involved in unsaturated fatty acids biosynthesis. Catalyzes the dehydration of short chain beta-hydroxyacyl-ACPs and long chain saturated and unsaturated beta-hydroxyacyl-ACPs. In Jannaschia sp. (strain CCS1), this protein is 3-hydroxyacyl-[acyl-carrier-protein] dehydratase FabZ.